A 512-amino-acid chain; its full sequence is 2-isopropylmalate synthase (512 aa).

The region spanning 5-268 is the Pyruvate carboxyltransferase domain; that stretch reads LIIFDTTLRD…DIGIDTQQIL (264 aa). Mn(2+) is bound by residues Asp14, His202, His204, and Asn239. Positions 394–512 are regulatory domain; it reads GFVSLSQHSE…SKADRVAAQG (119 aa).

This sequence belongs to the alpha-IPM synthase/homocitrate synthase family. LeuA type 1 subfamily. As to quaternary structure, homodimer. Requires Mn(2+) as cofactor.

The protein resides in the cytoplasm. It carries out the reaction 3-methyl-2-oxobutanoate + acetyl-CoA + H2O = (2S)-2-isopropylmalate + CoA + H(+). Its pathway is amino-acid biosynthesis; L-leucine biosynthesis; L-leucine from 3-methyl-2-oxobutanoate: step 1/4. In terms of biological role, catalyzes the condensation of the acetyl group of acetyl-CoA with 3-methyl-2-oxobutanoate (2-ketoisovalerate) to form 3-carboxy-3-hydroxy-4-methylpentanoate (2-isopropylmalate). In Polaromonas naphthalenivorans (strain CJ2), this protein is 2-isopropylmalate synthase.